A 104-amino-acid polypeptide reads, in one-letter code: Small ribosomal subunit protein uS10 (104 aa).

Belongs to the universal ribosomal protein uS10 family. Part of the 30S ribosomal subunit.

Involved in the binding of tRNA to the ribosomes. This Thermoplasma acidophilum (strain ATCC 25905 / DSM 1728 / JCM 9062 / NBRC 15155 / AMRC-C165) protein is Small ribosomal subunit protein uS10.